The primary structure comprises 115 residues: NADH-ubiquinone oxidoreductase chain 3 (115 aa).

Transmembrane regions (helical) follow at residues 4-24 (LLTM…AFWL), 55-75 (FFLV…LLPI), and 84-104 (INTM…GLAY).

Belongs to the complex I subunit 3 family. In terms of assembly, core subunit of respiratory chain NADH dehydrogenase (Complex I) which is composed of 45 different subunits. Interacts with TMEM186. Interacts with TMEM242.

Its subcellular location is the mitochondrion inner membrane. The catalysed reaction is a ubiquinone + NADH + 5 H(+)(in) = a ubiquinol + NAD(+) + 4 H(+)(out). Functionally, core subunit of the mitochondrial membrane respiratory chain NADH dehydrogenase (Complex I) which catalyzes electron transfer from NADH through the respiratory chain, using ubiquinone as an electron acceptor. Essential for the catalytic activity of complex I. The sequence is that of NADH-ubiquinone oxidoreductase chain 3 from Neotoma lepida (Desert woodrat).